The primary structure comprises 453 residues: Formimidoylglutamate deiminase (453 aa).

H56 and H58 together coordinate Zn(2+). N-formimidoyl-L-glutamate contacts are provided by Q61, R82, Y121, H206, and R209. Zn(2+) is bound at residue H232. E235 is an N-formimidoyl-L-glutamate binding site. Residues H269 and D320 each act as proton acceptor in the active site. Residue D320 participates in Zn(2+) binding.

The protein belongs to the metallo-dependent hydrolases superfamily. Homodimer. Zn(2+) serves as cofactor.

It catalyses the reaction N-formimidoyl-L-glutamate + H2O = N-formyl-L-glutamate + NH4(+). The protein operates within amino-acid degradation; L-histidine degradation into L-glutamate; L-glutamate from N-formimidoyl-L-glutamate (deiminase route): step 1/2. With respect to regulation, inhibited by the metal chelator dipicolinate. Inhibited by N-formimino-L-aspartate and N-guanidino-L-glutaric acid. In terms of biological role, catalyzes the hydrolysis of N-formimino-L-glutamate to N-formyl-L-glutamate and ammonia. The sequence is that of Formimidoylglutamate deiminase from Pseudomonas aeruginosa (strain ATCC 15692 / DSM 22644 / CIP 104116 / JCM 14847 / LMG 12228 / 1C / PRS 101 / PAO1).